A 776-amino-acid polypeptide reads, in one-letter code: Ribosomal biogenesis protein LAS1L (776 aa).

A compositionally biased stretch (acidic residues) spans 185 to 227; sequence DEDQLDAEDPEEEEREIIADDVLEEIPEPQDDDKDEELAVEDD. A disordered region spans residues 185–247; sequence DEDQLDAEDP…SHPEPSSRHK (63 aa). Over residues 228–247 the composition is skewed to basic and acidic residues; the sequence is ANTKGNEEVASHPEPSSRHK. Residues Ser-425 and Ser-509 each carry the phosphoserine modification. The disordered stretch occupies residues 501–646; that stretch reads KAIEGSSSSS…DYDDDEEEDR (146 aa). A compositionally biased stretch (basic and acidic residues) spans 544 to 557; sequence GNLKDVKQEEKKEN. Acidic residues-rich tracts occupy residues 558–602 and 611–646; these read EEEE…EEEE and MEAD…EEDR. A Phosphoserine modification is found at Ser-658. The interval 677–696 is interaction with NOL9; it reads SAWQVSSEDVRWGTFPLGRL. The tract at residues 733–759 is disordered; sequence SSTLSLCCGGSNTNSSSSSSSGNMEGL. The span at 741–755 shows a compositional bias: low complexity; sequence GGSNTNSSSSSSSGN.

The protein belongs to the LAS1 family. As to quaternary structure, component of some MLL1/MLL complex, at least composed of the core components KMT2A/MLL1, ASH2L, HCFC1/HCF1, WDR5 and RBBP5, as well as the facultative components BACC1, CHD8, E2F6, HSP70, INO80C, KANSL1, LAS1L, MAX, MCRS1, MGA, MYST1/MOF, PELP1, PHF20, PRP31, RING2, RUVB1/TIP49A, RUVB2/TIP49B, SENP3, TAF1, TAF4, TAF6, TAF7, TAF9 and TEX10. Component of the 5FMC complex, at least composed of PELP1, LAS1L, TEX10, WDR18 and SENP3; the complex interacts with methylated CHTOP and ZNF148. Interacts with NOL9 to form an ITS2 pre-rRNA endonuclease-kinase complex.

It is found in the nucleus. The protein resides in the nucleolus. Its subcellular location is the nucleoplasm. It localises to the cytoplasm. In terms of biological role, required for the synthesis of the 60S ribosomal subunit and maturation of the 28S rRNA. Functions as a component of the Five Friends of Methylated CHTOP (5FMC) complex; the 5FMC complex is recruited to ZNF148 by methylated CHTOP, leading to desumoylation of ZNF148 and subsequent transactivation of ZNF148 target genes. Required for the efficient pre-rRNA processing at both ends of internal transcribed spacer 2 (ITS2). The protein is Ribosomal biogenesis protein LAS1L (Las1l) of Mus musculus (Mouse).